The following is a 187-amino-acid chain: GTP cyclohydrolase 1 1 (187 aa).

Belongs to the GTP cyclohydrolase I family. In terms of assembly, homomer.

The catalysed reaction is GTP + H2O = 7,8-dihydroneopterin 3'-triphosphate + formate + H(+). It functions in the pathway cofactor biosynthesis; 7,8-dihydroneopterin triphosphate biosynthesis; 7,8-dihydroneopterin triphosphate from GTP: step 1/1. This chain is GTP cyclohydrolase 1 1, found in Pseudomonas syringae pv. tomato (strain ATCC BAA-871 / DC3000).